A 1076-amino-acid chain; its full sequence is Structural maintenance of chromosomes protein 5 (1076 aa).

49–56 serves as a coordination point for ATP; that stretch reads GHNGSGKS. Positions 190-415 form a coiled coil; the sequence is STSIEDKCTT…KRDEEQNSQL (226 aa). Residues 375–410 show a composition bias toward basic and acidic residues; sequence EQKYSTAERDSRQEEDAIQKKSYEMRQLENKKRDEE. Positions 375-420 are disordered; the sequence is EQKYSTAERDSRQEEDAIQKKSYEMRQLENKKRDEEQNSQLNRQDR. Positions 416-617 are flexible hinge; the sequence is NRQDRYRVLQ…ANTWRDQFFK (202 aa). Coiled-coil stretches lie at residues 627–713 and 749–786; these read NSIL…EKKA and KSRV…ALNH.

Belongs to the SMC family. SMC5 subfamily. As to quaternary structure, interacts with smc-6. In terms of tissue distribution, expressed in the germline (at protein level).

The protein resides in the nucleus. It localises to the chromosome. Its function is as follows. Core component of the smc-5/smc-6 complex. Functions in DNA double strand break repair by promoting sister-chromatid homologous recombination during meiosis. Acts in a DNA repair pathway for removal of ionizing radiation- and ultraviolet (UV) radiation-induced DNA lesions that is distinct from classical nucleotide excision repair and the translesion synthesis pathway. Also involved in the recovery of stalled replication forks. The sequence is that of Structural maintenance of chromosomes protein 5 from Caenorhabditis elegans.